The primary structure comprises 209 residues: Probable transcriptional regulator ycf29 (209 aa).

The 117-residue stretch at 4–120 folds into the Response regulatory domain; that stretch reads NLMLVENDTV…ELVSLIKNLI (117 aa). Asp53 is subject to 4-aspartylphosphate. Residues 139-204 enclose the HTH luxR-type domain; the sequence is PLFQLLYLTP…LLVKYSIKNN (66 aa).

It localises to the plastid. The protein resides in the chloroplast. The sequence is that of Probable transcriptional regulator ycf29 (ycf29) from Porphyra purpurea (Red seaweed).